The chain runs to 124 residues: Small ribosomal subunit protein uS12 (124 aa).

A disordered region spans residues 1–42; it reads MPTIQQLVRKGRRPKVNKTKSPALRGNPQQRGVCSRVYTTTP. Residues 9-18 show a composition bias toward basic residues; that stretch reads RKGRRPKVNK. Polar residues predominate over residues 27–42; that stretch reads NPQQRGVCSRVYTTTP. At D89 the chain carries 3-methylthioaspartic acid.

It belongs to the universal ribosomal protein uS12 family. Part of the 30S ribosomal subunit. Contacts proteins S8 and S17. May interact with IF1 in the 30S initiation complex.

Functionally, with S4 and S5 plays an important role in translational accuracy. In terms of biological role, interacts with and stabilizes bases of the 16S rRNA that are involved in tRNA selection in the A site and with the mRNA backbone. Located at the interface of the 30S and 50S subunits, it traverses the body of the 30S subunit contacting proteins on the other side and probably holding the rRNA structure together. The combined cluster of proteins S8, S12 and S17 appears to hold together the shoulder and platform of the 30S subunit. In Tropheryma whipplei (strain TW08/27) (Whipple's bacillus), this protein is Small ribosomal subunit protein uS12.